Here is a 366-residue protein sequence, read N- to C-terminus: ERCC4 domain-containing protein EP364R (366 aa).

The 99-residue stretch at 3-101 (FLVADHREHH…QLYFFVEGPA (99 aa)) folds into the ERCC4 domain.

It belongs to the asfivirus EP364R family.

Its function is as follows. Plays a role in the inhibition of type I interferon signaling pathway. Mechanistically, specifically interacts with 2',3'-cGAMP and cleaves it via its phosphodiesterase activity. In turn, prevents 2',3'-cGAMP interaction with host ER-resident STING1 leading to inhibition of downstream signaling pathway and type I interferon production. This chain is ERCC4 domain-containing protein EP364R, found in African swine fever virus (isolate Pig/Kenya/KEN-50/1950) (ASFV).